The chain runs to 45 residues: DVSFRLSGATSKKKVYFISNLRKALPNEKKLYDIPLVRSSXSGSK.

It belongs to the ribosome-inactivating protein family. Type 1 RIP subfamily.

The enzyme catalyses Endohydrolysis of the N-glycosidic bond at one specific adenosine on the 28S rRNA.. Capable of inhibiting HIV-1 infection and replication. It inactivates eukaryotic 60S ribosomal subunits. This Trichosanthes kirilowii (Chinese snake gourd) protein is Ribosome-inactivating protein TAP-29.